A 475-amino-acid polypeptide reads, in one-letter code: NADH-ubiquinone oxidoreductase chain 2 (475 aa).

The next 13 membrane-spanning stretches (helical) occupy residues 45–65 (LAVL…GIQY), 82–102 (APIV…LTTT), 112–132 (IALL…VNDL), 133–153 (IPLY…TGVY), 162–182 (AAIL…LSSA), 198–220 (TYYS…ALVF), 240–260 (LYIT…FIYL), 262–282 (IHLF…AVAA), 291–311 (IKSI…TAVL), 318–338 (YIYI…ILAI), 365–385 (LCIA…LPGF), 402–422 (LEAL…AYII), and 447–467 (FIIS…PTLL).

This sequence belongs to the complex I subunit 2 family.

It localises to the mitochondrion inner membrane. The enzyme catalyses a ubiquinone + NADH + 5 H(+)(in) = a ubiquinol + NAD(+) + 4 H(+)(out). In terms of biological role, core subunit of the mitochondrial membrane respiratory chain NADH dehydrogenase (Complex I) that is believed to belong to the minimal assembly required for catalysis. Complex I functions in the transfer of electrons from NADH to the respiratory chain. The immediate electron acceptor for the enzyme is believed to be ubiquinone. The sequence is that of NADH-ubiquinone oxidoreductase chain 2 (NAD2) from Candida albicans (strain SC5314 / ATCC MYA-2876) (Yeast).